Consider the following 107-residue polypeptide: uncharacterized protein (107 aa).

The segment at 86-107 is disordered; sequence KRAETARLPAATPQKRTGPARG.

This is an uncharacterized protein from Saccharomyces cerevisiae (strain ATCC 204508 / S288c) (Baker's yeast).